The following is a 191-amino-acid chain: Protein GrpE (191 aa).

Residues 1 to 22 form a disordered region; the sequence is MKDKHNQEHDHLSQEEPESCEK.

Belongs to the GrpE family. As to quaternary structure, homodimer.

The protein localises to the cytoplasm. Participates actively in the response to hyperosmotic and heat shock by preventing the aggregation of stress-denatured proteins, in association with DnaK and GrpE. It is the nucleotide exchange factor for DnaK and may function as a thermosensor. Unfolded proteins bind initially to DnaJ; upon interaction with the DnaJ-bound protein, DnaK hydrolyzes its bound ATP, resulting in the formation of a stable complex. GrpE releases ADP from DnaK; ATP binding to DnaK triggers the release of the substrate protein, thus completing the reaction cycle. Several rounds of ATP-dependent interactions between DnaJ, DnaK and GrpE are required for fully efficient folding. The chain is Protein GrpE from Helicobacter pylori (strain Shi470).